Consider the following 290-residue polypeptide: ATP synthase gamma chain (290 aa).

This sequence belongs to the ATPase gamma chain family. In terms of assembly, F-type ATPases have 2 components, CF(1) - the catalytic core - and CF(0) - the membrane proton channel. CF(1) has five subunits: alpha(3), beta(3), gamma(1), delta(1), epsilon(1). CF(0) has three main subunits: a, b and c.

The protein localises to the cell membrane. In terms of biological role, produces ATP from ADP in the presence of a proton gradient across the membrane. The gamma chain is believed to be important in regulating ATPase activity and the flow of protons through the CF(0) complex. This Buchnera aphidicola subsp. Schlechtendalia chinensis protein is ATP synthase gamma chain.